The sequence spans 105 residues: Met repressor (105 aa).

The protein belongs to the MetJ family. In terms of assembly, homodimer.

The protein resides in the cytoplasm. Its function is as follows. This regulatory protein, when combined with SAM (S-adenosylmethionine) represses the expression of the methionine regulon and of enzymes involved in SAM synthesis. In Yersinia pestis bv. Antiqua (strain Antiqua), this protein is Met repressor.